A 184-amino-acid chain; its full sequence is dCTP deaminase (184 aa).

Residue 107–112 participates in dCTP binding; sequence KSTYAR. The active-site Proton donor/acceptor is the Glu-133. DCTP-binding residues include Gln-152, Tyr-166, and Gln-176.

The protein belongs to the dCTP deaminase family. As to quaternary structure, homotrimer.

It carries out the reaction dCTP + H2O + H(+) = dUTP + NH4(+). The protein operates within pyrimidine metabolism; dUMP biosynthesis; dUMP from dCTP (dUTP route): step 1/2. Its function is as follows. Catalyzes the deamination of dCTP to dUTP. The chain is dCTP deaminase from Granulibacter bethesdensis (strain ATCC BAA-1260 / CGDNIH1).